We begin with the raw amino-acid sequence, 176 residues long: NAD(P)H-quinone oxidoreductase subunit 6, chloroplastic (176 aa).

5 consecutive transmembrane segments (helical) span residues 10 to 30, 33 to 53, 60 to 80, 92 to 112, and 152 to 172; these read ILVLFGGFVLLLGGLGVVLLT, TFSAFSLGLVLVCISLFYILL, VAQLLIYVGAINVLIIFAVMF, FWTIGDGFTSLVCITIPFSLM, and FYLPFELISIILLVSLIGAIT.

The protein belongs to the complex I subunit 6 family. NDH is composed of at least 16 different subunits, 5 of which are encoded in the nucleus.

It localises to the plastid. The protein localises to the chloroplast thylakoid membrane. The enzyme catalyses a plastoquinone + NADH + (n+1) H(+)(in) = a plastoquinol + NAD(+) + n H(+)(out). It carries out the reaction a plastoquinone + NADPH + (n+1) H(+)(in) = a plastoquinol + NADP(+) + n H(+)(out). In terms of biological role, NDH shuttles electrons from NAD(P)H:plastoquinone, via FMN and iron-sulfur (Fe-S) centers, to quinones in the photosynthetic chain and possibly in a chloroplast respiratory chain. The immediate electron acceptor for the enzyme in this species is believed to be plastoquinone. Couples the redox reaction to proton translocation, and thus conserves the redox energy in a proton gradient. In Oryza nivara (Indian wild rice), this protein is NAD(P)H-quinone oxidoreductase subunit 6, chloroplastic (ndhG).